The primary structure comprises 580 residues: Anaphase-promoting complex subunit 7 (580 aa).

TPR repeat units lie at residues 50 to 83 (IISFSLFGDSLFGKNEFVRSLKYFKQSLDILFKV), 107 to 140 (YELKYKISLCYIKINRNNLAISYLESIPFSSRGL), 141 to 175 (DTHLTIARLYKDIGKEKSKECIISYKEVIKLCPLC), 253 to 286 (VLEKLALSYLYHDEPSIINTFNIFQKIRLLDPYY), 321 to 354 (AETWTSVALFYFLKENVEKSLENVDRAISIKESH), 356 to 388 (FAHSLKGEILLSLDEPREALPSLERAFQLSKNI), 390 to 421 (TARELVRCHLILNQMKEALVVAETINNLSPDY), 422 to 456 (SKTMALLGMVLANQPEEREEARKILTKALTLSPHC), 458 to 490 (DTVLTLSKLNVVEGRFQEAIDILNSQLEYQETD), and 491 to 523 (LMHTEIAGVYLTKDYHEDAMIHYNSALEINPQY). Residues 539 to 580 (GIDPDQELDQENDDDDQEEGEGENDQEENDDDDNDDDDEYIS) form a disordered region. The segment covering 542–580 (PDQELDQENDDDDQEEGEGENDQEENDDDDNDDDDEYIS) has biased composition (acidic residues).

The protein belongs to the APC7 family. As to quaternary structure, the APC/C is composed of at least 13 subunits that stay tightly associated throughout the cell cycle: anapc1, anapc2, anapc3, anapc4, anapc5, anapc6, anapc7, anapc8, anapc10, anapc11, cdc20, cdc26 and cdh1.

Its subcellular location is the nucleus. The protein operates within protein modification; protein ubiquitination. Its function is as follows. Component of the anaphase promoting complex/cyclosome (APC/C), a cell cycle-regulated E3 ubiquitin-protein ligase complex that controls progression through mitosis and the G1 phase of the cell cycle. The sequence is that of Anaphase-promoting complex subunit 7 (anapc7) from Dictyostelium discoideum (Social amoeba).